The sequence spans 802 residues: Fibroblast growth factor receptor 3 (802 aa).

The Ig-like C2-type 1 domain maps to 27–115 (PDYLMVEQPP…ILRNFTIRVT (89 aa)). A disulfide bridge links cysteine 52 with cysteine 98. N-linked (GlcNAc...) asparagine glycosylation is found at asparagine 74, asparagine 87, and asparagine 109. Positions 116–148 (DLPSSGDDEDDDDDDDDETEDREPPRWTQPERM) are disordered. The span at 121-136 (GDDEDDDDDDDDETED) shows a compositional bias: acidic residues. The segment covering 137 to 148 (REPPRWTQPERM) has biased composition (basic and acidic residues). Ig-like C2-type domains are found at residues 140–233 (PRWT…YQLD) and 242–342 (PILQ…FWLH). Cysteine 165 and cysteine 217 are joined by a disulfide. N-linked (GlcNAc...) asparagine glycans are attached at residues asparagine 214, asparagine 251, asparagine 283, asparagine 303, and asparagine 315. A disulfide bridge connects residues cysteine 264 and cysteine 326. The chain crosses the membrane as a helical span at residues 363–383 (ITVLIVVTSTIVFILLVIIVI). Residues 384-802 (THLMKVPSKK…HQQHNGAIPT (419 aa)) are Cytoplasmic-facing. The Protein kinase domain occupies 462 to 751 (LTLGKPLGEG…LTVTSTNEYL (290 aa)). ATP-binding positions include 468–476 (LGEGCFGQV) and lysine 498. Residue aspartate 607 is the Proton acceptor of the active site. Tyrosine 637, tyrosine 638, tyrosine 714, and tyrosine 750 each carry phosphotyrosine; by autocatalysis.

Belongs to the protein kinase superfamily. Tyr protein kinase family. Fibroblast growth factor receptor subfamily. Monomer. Homodimer after ligand binding. Autophosphorylated. Binding of FGF family members together with heparan sulfate proteoglycan or heparin promotes receptor dimerization and autophosphorylation on tyrosine residues. Autophosphorylation occurs in trans between the two FGFR molecules present in the dimer.

Its subcellular location is the cell membrane. It carries out the reaction L-tyrosyl-[protein] + ATP = O-phospho-L-tyrosyl-[protein] + ADP + H(+). Its activity is regulated as follows. Present in an inactive conformation in the absence of bound ligand. Ligand binding leads to dimerization and activation by autophosphorylation on tyrosine residues. In terms of biological role, tyrosine-protein kinase that acts as a cell-surface receptor for fibroblast growth factors and plays an essential role in the regulation of cell proliferation, differentiation and apoptosis. Plays an essential role in the regulation of chondrocyte differentiation, proliferation and apoptosis, and is required for normal skeleton development. Regulates both osteogenesis and postnatal bone mineralization by osteoblasts. Promotes apoptosis in chondrocytes, but can also promote cancer cell proliferation. Phosphorylates PLCG1, CBL and FRS2. Ligand binding leads to the activation of several signaling cascades. Activation of PLCG1 leads to the production of the cellular signaling molecules diacylglycerol and inositol 1,4,5-trisphosphate. Phosphorylation of FRS2 triggers recruitment of GRB2, GAB1, PIK3R1 and SOS1, and mediates activation of RAS, MAPK1/ERK2, MAPK3/ERK1 and the MAP kinase signaling pathway, as well as of the AKT1 signaling pathway. The sequence is that of Fibroblast growth factor receptor 3 (fgfr3) from Xenopus laevis (African clawed frog).